The sequence spans 154 residues: Prefoldin subunit 2 (154 aa).

Basic and acidic residues predominate over residues 124–139; that stretch reads IRLMGEDEKPAAKENS. The tract at residues 124–154 is disordered; that stretch reads IRLMGEDEKPAAKENSEGAGAKASSAGVLVS. The segment covering 140–154 has biased composition (low complexity); sequence EGAGAKASSAGVLVS.

This sequence belongs to the prefoldin subunit beta family. Heterohexamer of two PFD-alpha type and four PFD-beta type subunits. Component of the PAQosome complex which is responsible for the biogenesis of several protein complexes and which consists of R2TP complex members RUVBL1, RUVBL2, RPAP3 and PIH1D1, URI complex members PFDN2, PFDN6, PDRG1, UXT and URI1 as well as ASDURF, POLR2E and DNAAF10/WDR92. Interacts with URI1; the interaction is phosphorylation-dependent and occurs in a growth-dependent manner.

It is found in the nucleus. The protein resides in the cytoplasm. The protein localises to the mitochondrion. Its function is as follows. Binds specifically to cytosolic chaperonin (c-CPN) and transfers target proteins to it. Binds to nascent polypeptide chain and promotes folding in an environment in which there are many competing pathways for nonnative proteins. The chain is Prefoldin subunit 2 (PFDN2) from Homo sapiens (Human).